The sequence spans 183 residues: uncharacterized protein (183 aa).

An SIS domain is found at 27–170; the sequence is MIKLIDSARS…VAEIMMQKHL (144 aa).

The protein belongs to the SIS family. PHI subfamily.

This is an uncharacterized protein from Archaeoglobus fulgidus (strain ATCC 49558 / DSM 4304 / JCM 9628 / NBRC 100126 / VC-16).